A 111-amino-acid polypeptide reads, in one-letter code: MEASAKLTFARLSPRKTRLVVDMVRGKGIQDALTILRFSPQASAKLVSKLLRSAVANAEQKGASDVDRLYVKSISVDGGPVLKRFVPRAMGRASKIRKPTSHITVVLADKQ.

The protein belongs to the universal ribosomal protein uL22 family. As to quaternary structure, part of the 50S ribosomal subunit.

In terms of biological role, this protein binds specifically to 23S rRNA; its binding is stimulated by other ribosomal proteins, e.g. L4, L17, and L20. It is important during the early stages of 50S assembly. It makes multiple contacts with different domains of the 23S rRNA in the assembled 50S subunit and ribosome. Its function is as follows. The globular domain of the protein is located near the polypeptide exit tunnel on the outside of the subunit, while an extended beta-hairpin is found that lines the wall of the exit tunnel in the center of the 70S ribosome. In Geobacter sulfurreducens (strain ATCC 51573 / DSM 12127 / PCA), this protein is Large ribosomal subunit protein uL22.